A 444-amino-acid chain; its full sequence is Ribosomal protein uS12 methylthiotransferase RimO (444 aa).

The 117-residue stretch at 3–119 (IKIGLVSLGC…IARAVRRVLE (117 aa)) folds into the MTTase N-terminal domain. 6 residues coordinate [4Fe-4S] cluster: C12, C48, C82, C156, C160, and C163. The Radical SAM core domain maps to 142-372 (ATPPYTAYLK…MMLQQEISLQ (231 aa)). Residues 375 to 444 (LKRVGEVIEV…EYDLTGETVL (70 aa)) enclose the TRAM domain.

This sequence belongs to the methylthiotransferase family. RimO subfamily. The cofactor is [4Fe-4S] cluster.

It localises to the cytoplasm. It catalyses the reaction L-aspartate(89)-[ribosomal protein uS12]-hydrogen + (sulfur carrier)-SH + AH2 + 2 S-adenosyl-L-methionine = 3-methylsulfanyl-L-aspartate(89)-[ribosomal protein uS12]-hydrogen + (sulfur carrier)-H + 5'-deoxyadenosine + L-methionine + A + S-adenosyl-L-homocysteine + 2 H(+). Its function is as follows. Catalyzes the methylthiolation of an aspartic acid residue of ribosomal protein uS12. In Pelotomaculum thermopropionicum (strain DSM 13744 / JCM 10971 / SI), this protein is Ribosomal protein uS12 methylthiotransferase RimO.